The sequence spans 151 residues: Deoxyuridine 5'-triphosphate nucleotidohydrolase (151 aa).

Substrate contacts are provided by residues 70-72 (RSG), Asn-83, and 87-89 (TID).

It belongs to the dUTPase family. Requires Mg(2+) as cofactor.

The enzyme catalyses dUTP + H2O = dUMP + diphosphate + H(+). Its pathway is pyrimidine metabolism; dUMP biosynthesis; dUMP from dCTP (dUTP route): step 2/2. In terms of biological role, this enzyme is involved in nucleotide metabolism: it produces dUMP, the immediate precursor of thymidine nucleotides and it decreases the intracellular concentration of dUTP so that uracil cannot be incorporated into DNA. The chain is Deoxyuridine 5'-triphosphate nucleotidohydrolase from Ruegeria pomeroyi (strain ATCC 700808 / DSM 15171 / DSS-3) (Silicibacter pomeroyi).